The sequence spans 420 residues: D-tagatose-1,6-bisphosphate aldolase subunit GatZ (420 aa).

The protein belongs to the GatZ/KbaZ family. GatZ subfamily. In terms of assembly, forms a complex with GatY.

It participates in carbohydrate metabolism; D-tagatose 6-phosphate degradation; D-glyceraldehyde 3-phosphate and glycerone phosphate from D-tagatose 6-phosphate: step 2/2. In terms of biological role, component of the tagatose-1,6-bisphosphate aldolase GatYZ that is required for full activity and stability of the Y subunit. Could have a chaperone-like function for the proper and stable folding of GatY. When expressed alone, GatZ does not show any aldolase activity. Is involved in the catabolism of galactitol. The polypeptide is D-tagatose-1,6-bisphosphate aldolase subunit GatZ (Escherichia coli O8 (strain IAI1)).